A 1401-amino-acid polypeptide reads, in one-letter code: DNA-directed RNA polymerase subunit beta'' (1401 aa).

Zn(2+) is bound by residues cysteine 224, cysteine 295, cysteine 302, and cysteine 305.

This sequence belongs to the RNA polymerase beta' chain family. RpoC2 subfamily. In terms of assembly, in plastids the minimal PEP RNA polymerase catalytic core is composed of four subunits: alpha, beta, beta', and beta''. When a (nuclear-encoded) sigma factor is associated with the core the holoenzyme is formed, which can initiate transcription. Zn(2+) serves as cofactor.

The protein localises to the plastid. It localises to the chloroplast. The enzyme catalyses RNA(n) + a ribonucleoside 5'-triphosphate = RNA(n+1) + diphosphate. DNA-dependent RNA polymerase catalyzes the transcription of DNA into RNA using the four ribonucleoside triphosphates as substrates. This is DNA-directed RNA polymerase subunit beta'' from Ipomoea purpurea (Common morning glory).